Reading from the N-terminus, the 328-residue chain is ATP synthase mitochondrial F1 complex assembly factor 1 (328 aa).

A mitochondrion-targeting transit peptide spans methionine 1–glutamate 57.

This sequence belongs to the ATP11 family. In terms of assembly, interacts with ATP5F1B; involved in the assembly of the F1 component of the mitochondrial ATP synthase (ATPase). Weakly expressed in muscle.

The protein resides in the mitochondrion inner membrane. Its function is as follows. Has a complex stabilizing activity in the assembly of the mitochondrial F1-F0 complex. The chain is ATP synthase mitochondrial F1 complex assembly factor 1 from Homo sapiens (Human).